The primary structure comprises 1088 residues: RNA-directed RNA polymerase (1088 aa).

The region spanning 501-687 (LSYGDVTRFL…AKRYIAGGKI (187 aa)) is the RdRp catalytic domain.

It belongs to the reoviridae RNA-directed RNA polymerase family. As to quaternary structure, interacts with VP3 (Potential). Interacts with VP2; this interaction activates VP1. Interacts with NSP5; this interaction is probably necessary for the formation of functional virus factories. Interacts with NSP2; this interaction is weak. It depends on Mg(2+) as a cofactor.

It is found in the virion. The enzyme catalyses RNA(n) + a ribonucleoside 5'-triphosphate = RNA(n+1) + diphosphate. In terms of biological role, RNA-directed RNA polymerase that is involved in both transcription and genome replication. Together with VP3 capping enzyme, forms an enzyme complex positioned near the channels situated at each of the five-fold vertices of the core. Following infection, the outermost layer of the virus is lost, leaving a double-layered particle (DLP) made up of the core and VP6 shell. VP1 then catalyzes the transcription of fully conservative plus-strand genomic RNAs that are extruded through the DLP's channels into the cytoplasm where they function as mRNAs for translation of viral proteins. One copy of each of the viral (+)RNAs is also recruited during core assembly, together with newly synthesized polymerase complexes and VP2. The polymerase of these novo-formed particles catalyzes the synthesis of complementary minus-strands leading to dsRNA formation. To do so, the polymerase specifically recognizes and binds 4 bases 5'-UGUG-3' in the conserved 3'-sequence of plus-strand RNA templates. VP2 presumably activates the autoinhibited VP1-RNA complex to coordinate packaging and genome replication. Once dsRNA synthesis is complete, the polymerase switches to the transcriptional mode, thus providing secondary transcription. In Rotavirus A (strain RVA/Human/Philippines/L26/1987/G12P1B[4]) (RV-A), this protein is RNA-directed RNA polymerase.